The primary structure comprises 214 residues: Imidazole glycerol phosphate synthase subunit HisH (214 aa).

The region spanning 2 to 214 (RVALIDYGSG…LIANFLRWAP (213 aa)) is the Glutamine amidotransferase type-1 domain. Cys88 serves as the catalytic Nucleophile. Residues His194 and Glu196 contribute to the active site.

In terms of assembly, heterodimer of HisH and HisF.

It is found in the cytoplasm. The enzyme catalyses 5-[(5-phospho-1-deoxy-D-ribulos-1-ylimino)methylamino]-1-(5-phospho-beta-D-ribosyl)imidazole-4-carboxamide + L-glutamine = D-erythro-1-(imidazol-4-yl)glycerol 3-phosphate + 5-amino-1-(5-phospho-beta-D-ribosyl)imidazole-4-carboxamide + L-glutamate + H(+). It catalyses the reaction L-glutamine + H2O = L-glutamate + NH4(+). Its pathway is amino-acid biosynthesis; L-histidine biosynthesis; L-histidine from 5-phospho-alpha-D-ribose 1-diphosphate: step 5/9. In terms of biological role, IGPS catalyzes the conversion of PRFAR and glutamine to IGP, AICAR and glutamate. The HisH subunit catalyzes the hydrolysis of glutamine to glutamate and ammonia as part of the synthesis of IGP and AICAR. The resulting ammonia molecule is channeled to the active site of HisF. This chain is Imidazole glycerol phosphate synthase subunit HisH, found in Rhodospirillum rubrum (strain ATCC 11170 / ATH 1.1.1 / DSM 467 / LMG 4362 / NCIMB 8255 / S1).